The sequence spans 430 residues: MSKTHLTEQKFSDFALHPQVIEALETKGFHNCTPIQALALPFTLSGRDVAGQAQTGTGKTMAFLTSTFHHLLSHPAPEGRQTNQPRALILAPTRELAVQIHADAEPLAQITGLKLGLAYGGDGYDKQLKVLENGVDVLIGTTGRLIDYAKQNHVNLGAIQVVVLDEADRMFDLGFIKDIRWLFRRMPAANQRLNMLFSATLSFRVRELAFENMNNAEYVEVEPDQKTGHRIKEELFYPSNEEKMRLLQTLIEEEWPDRTIIFANTKHRCEDVWGHLAADGHRVGLLTGDVAQKKRLRILDDFTKGDVDILVATDVAARGLHIPAVTHVFNYDLPDDREDYVHRIGRTGRAGANGHSISLACEEYALNLPAIEEYIGHSITVSRYNSDALMTDLPPPKRLTRNRSGNGPRRGGNNNRRSSASRSPNRKRSG.

Residues 9 to 37 carry the Q motif motif; sequence QKFSDFALHPQVIEALETKGFHNCTPIQA. The Helicase ATP-binding domain occupies 40-219; that stretch reads LPFTLSGRDV…FENMNNAEYV (180 aa). 53-60 contacts ATP; it reads AQTGTGKT. The DEAD box motif lies at 165-168; that stretch reads DEAD. One can recognise a Helicase C-terminal domain in the interval 245-390; the sequence is RLLQTLIEEE…VSRYNSDALM (146 aa). Residues 388-430 form a disordered region; it reads ALMTDLPPPKRLTRNRSGNGPRRGGNNNRRSSASRSPNRKRSG. Residues 402–423 are compositionally biased toward low complexity; sequence NRSGNGPRRGGNNNRRSSASRS.

It belongs to the DEAD box helicase family. RhlB subfamily. Component of the RNA degradosome, which is a multiprotein complex involved in RNA processing and mRNA degradation.

It localises to the cytoplasm. The catalysed reaction is ATP + H2O = ADP + phosphate + H(+). Its function is as follows. DEAD-box RNA helicase involved in RNA degradation. Has RNA-dependent ATPase activity and unwinds double-stranded RNA. This Erwinia tasmaniensis (strain DSM 17950 / CFBP 7177 / CIP 109463 / NCPPB 4357 / Et1/99) protein is ATP-dependent RNA helicase RhlB.